Reading from the N-terminus, the 305-residue chain is MGIQPSPVLLASLGVGLFTLFGLALGTYLVRRSRRPQVTLQDPDEKYLLRLLDKTTVSHNTRRFRFALPTAHHILGLPVGKHVYLSARIDGSQVIRPYTPVTSDEDQGYVDLVIKVYLKGVHPKFSEGGKMSQYLDSLKIGDVVEFRGPSGLLSYAGKGNFNIQPNKKSPPELRVAKKLGMIAGGTGITPMLQLIRAILKVPEDPTQCFLLFANQTEKDIILREDLEELQAQYPIRFKLWFTLDYPPEDWTYSKGFVTADMIQEHLPAPAEDVLLLLCGPPPMVQLACHPNLDKLGYSQKMRFTY.

The helical transmembrane segment at 8-28 (VLLASLGVGLFTLFGLALGTY) threads the bilayer. One can recognise an FAD-binding FR-type domain in the interval 44 to 156 (DEKYLLRLLD…RGPSGLLSYA (113 aa)). FAD contacts are provided by residues 136–166 (DSLK…IQPN) and 175–210 (VAKK…QCFL).

Belongs to the flavoprotein pyridine nucleotide cytochrome reductase family. Requires FAD as cofactor.

It localises to the membrane. The catalysed reaction is 2 Fe(III)-[cytochrome b5] + NADH = 2 Fe(II)-[cytochrome b5] + NAD(+) + H(+). Its function is as follows. NADH-cytochrome b5 reductases are involved in desaturation and elongation of fatty acids, cholesterol biosynthesis, drug metabolism, and, in erythrocyte, methemoglobin reduction. This chain is NADH-cytochrome b5 reductase 1 (Cyb5r1), found in Rattus norvegicus (Rat).